The chain runs to 195 residues: Pyruvoyl-dependent arginine decarboxylase AaxB (195 aa).

S53 carries the post-translational modification Pyruvic acid (Ser).

This sequence belongs to the pyruvoyl-dependent arginine decarboxylase family. As to quaternary structure, trimer of an alpha-beta dimer. Pyruvate is required as a cofactor.

It localises to the cytoplasm. It carries out the reaction L-arginine + H(+) = agmatine + CO2. Its function is as follows. Part of the AaxABC system, catalyzes the decarboxylation of L-arginine. The arginine uptake by the bacterium in the macrophage may be a virulence factor against the host innate immune response. This Chlamydia caviae (strain ATCC VR-813 / DSM 19441 / 03DC25 / GPIC) (Chlamydophila caviae) protein is Pyruvoyl-dependent arginine decarboxylase AaxB (aaxB).